We begin with the raw amino-acid sequence, 311 residues long: Mediator of RNA polymerase II transcription subunit 27 (311 aa).

Residue Ser132 is modified to Phosphoserine. An N6-methyllysine modification is found at Lys134.

This sequence belongs to the Mediator complex subunit 27 family. Component of the Mediator complex, which is composed of MED1, MED4, MED6, MED7, MED8, MED9, MED10, MED11, MED12, MED13, MED13L, MED14, MED15, MED16, MED17, MED18, MED19, MED20, MED21, MED22, MED23, MED24, MED25, MED26, MED27, MED29, MED30, MED31, CCNC, CDK8 and CDC2L6/CDK11. The MED12, MED13, CCNC and CDK8 subunits form a distinct module termed the CDK8 module. Mediator containing the CDK8 module is less active than Mediator lacking this module in supporting transcriptional activation. Individual preparations of the Mediator complex lacking one or more distinct subunits have been variously termed ARC, CRSP, DRIP, PC2, SMCC and TRAP.

It localises to the nucleus. Functionally, component of the Mediator complex, a coactivator involved in the regulated transcription of nearly all RNA polymerase II-dependent genes. Mediator functions as a bridge to convey information from gene-specific regulatory proteins to the basal RNA polymerase II transcription machinery. Mediator is recruited to promoters by direct interactions with regulatory proteins and serves as a scaffold for the assembly of a functional preinitiation complex with RNA polymerase II and the general transcription factors. This is Mediator of RNA polymerase II transcription subunit 27 (MED27) from Sus scrofa (Pig).